The primary structure comprises 226 residues: MYSIKCDDNKAMPRERLMRLGAESLSNQELLAILLRTGNKEKHVLELSSYLLSHLDSLADFKKMSLQELQHLAGIGKVKAIEIKAMIELVSRILATDKTLTDSVLTSVQVAEKMMAALGDKKQEHLVVLYLDNQNRIFEEKTIFIGTVRRSLAEPREILYYACKNMATSLIVIHNHPSGNIEPSSNDYCFTEKIKRSCEDLGIICLDHIIVSYKDYYSFREKSTLF.

The region spanning 103 to 225 (SVLTSVQVAE…YYSFREKSTL (123 aa)) is the MPN domain. Residues His-174, His-176, and Asp-187 each coordinate Zn(2+). A JAMM motif motif is present at residues 174 to 187 (HNHPSGNIEPSSND).

This sequence belongs to the UPF0758 family.

The sequence is that of UPF0758 protein M28_Spy0816 from Streptococcus pyogenes serotype M28 (strain MGAS6180).